The sequence spans 734 residues: MASRFPRFSQGLSQDPTTRRIWFGIATAHDFESHDNITEERLYQKIFASHFGQLAIIFLWTSGNLFHVAWQGNFEAWIQDPLHVRPIAHAIWDPHFGQPAIEAFTRGGASGPVNIAYPGVYQWWYTIGLRTNQDLYTGALSLLILSAIFLIAGWLHLQPKWKPSVSWFKNAESRLNHHLSGLFGVSSLAWTGHLVHVAIPESRGEHVRWDNLLTALPHPQGLGPFFAGQWSVYAQNADSSSHLFGTSQGAGTAILTFLGGFHPQTQSLWLTDIAHHHLAIAVVFIIAGHMYRTNFGIGHSMKEILEAHTPPGGRLGRGHKGLYDTINNSLHFQLGLALASLGVITSLVAQHMYSLPAYAFIAQDFTTQAALYTHHQYIAGFIMTGAFAHGAIFLIRDYNPEQNEGNVLARMLEHKEAIISHLSWASLFLGFHTLGLYVHNDVMLAFGTPEKQILIEPVSAQWIQSAHGKALYGFDVLLSSANSPAFNAGQSIWLPGWLDTINNNSNSLFLTIGPGDFLVHHAIALGLHTTTLILVKGALDARGSKLMPDKKEFGYSFPCDGPGRGGTCDISAWDAFYSAVFWMLNTIGWVTLYWHWKHITLWQGNVAQFNESSTYLMGWLRDYLWLNPSQLINGYNPFGMNSLSVWAWMFLFGHLVWAIGFMFLISWRGYWQELIETLAWAHERTPLANLVRWKDKPVALSIVQARLVGLAHFSVGYIFTYAAFLIASTSGKFG.

The next 8 membrane-spanning stretches (helical) occupy residues 46–69, 135–158, 175–199, 273–291, 330–353, 369–395, 417–439, and 517–535; these read IFASHFGQLAIIFLWTSGNLFHVA, LYTGALSLLILSAIFLIAGWLHLQ, LNHHLSGLFGVSSLAWTGHLVHVAI, IAHHHLAIAVVFIIAGHMY, LHFQLGLALASLGVITSLVAQHMY, AALYTHHQYIAGFIMTGAFAHGAIFLI, AIISHLSWASLFLGFHTLGLYVH, and FLVHHAIALGLHTTTLILV. [4Fe-4S] cluster is bound by residues C559 and C568. 2 helical membrane-spanning segments follow: residues 575–596 and 643–665; these read AFYSAVFWMLNTIGWVTLYWHW and LSVWAWMFLFGHLVWAIGFMFLI. H654, M662, and Y670 together coordinate chlorophyll a. Residue W671 coordinates phylloquinone. Residues 707–727 traverse the membrane as a helical segment; the sequence is LVGLAHFSVGYIFTYAAFLIA.

Belongs to the PsaA/PsaB family. As to quaternary structure, the PsaA/B heterodimer binds the P700 chlorophyll special pair and subsequent electron acceptors. PSI consists of a core antenna complex that captures photons, and an electron transfer chain that converts photonic excitation into a charge separation. The eukaryotic PSI reaction center is composed of at least 11 subunits. The cofactor is P700 is a chlorophyll a/chlorophyll a' dimer, A0 is one or more chlorophyll a, A1 is one or both phylloquinones and FX is a shared 4Fe-4S iron-sulfur center..

It localises to the plastid. The protein localises to the chloroplast thylakoid membrane. The enzyme catalyses reduced [plastocyanin] + hnu + oxidized [2Fe-2S]-[ferredoxin] = oxidized [plastocyanin] + reduced [2Fe-2S]-[ferredoxin]. In terms of biological role, psaA and PsaB bind P700, the primary electron donor of photosystem I (PSI), as well as the electron acceptors A0, A1 and FX. PSI is a plastocyanin-ferredoxin oxidoreductase, converting photonic excitation into a charge separation, which transfers an electron from the donor P700 chlorophyll pair to the spectroscopically characterized acceptors A0, A1, FX, FA and FB in turn. Oxidized P700 is reduced on the lumenal side of the thylakoid membrane by plastocyanin. This chain is Photosystem I P700 chlorophyll a apoprotein A2, found in Huperzia lucidula (Shining clubmoss).